Reading from the N-terminus, the 307-residue chain is RHOMBOID-like protein 6, mitochondrial (307 aa).

The N-terminal 62 residues, 1–62 (MRSRDMERGR…DCVAKLLRRF (62 aa)), are a transit peptide targeting the mitochondrion. The next 6 helical transmembrane spans lie at 105-125 (WLHA…IFGI), 136-156 (IGLI…LFLQ), 159-179 (ISVG…SELL), 191-211 (ALLS…LPWV), 214-234 (FAHI…LMQP), and 262-282 (LFFV…VMLF). Catalysis depends on S164, which acts as the Nucleophile. The active-site Charge relay system is H216.

The protein belongs to the peptidase S54 family.

The protein resides in the mitochondrion membrane. It catalyses the reaction Cleaves type-1 transmembrane domains using a catalytic dyad composed of serine and histidine that are contributed by different transmembrane domains.. In terms of biological role, probable rhomboid-type serine protease that catalyzes intramembrane proteolysis. Might be involved in response to abiotic stimuli. In Arabidopsis thaliana (Mouse-ear cress), this protein is RHOMBOID-like protein 6, mitochondrial.